We begin with the raw amino-acid sequence, 358 residues long: DnaJ homolog subfamily B member 11 (358 aa).

The first 22 residues, 1–22, serve as a signal peptide directing secretion; the sequence is MAPQNLGTLCLLLLYLLGAAIA. Positions 25-90 constitute a J domain; that stretch reads DFYKILGVPR…EKRKQYDTYG (66 aa). Threonine 188 carries the phosphothreonine modification. Asparagine 261 is a glycosylation site (N-linked (GlcNAc...) asparagine).

In terms of assembly, part of a large chaperone multiprotein complex comprising DNAJB11, HSP90B1, HSPA5, HYOU, PDIA2, PDIA4, PDIA6, PPIB, SDF2L1, UGGT1 and very small amounts of ERP29, but not, or at very low levels, CALR nor CANX. Binds to denatured substrates in an ATP-independent manner. Interacts via the J domain with HSPA5 in an ATP-dependent manner. Post-translationally, contains high-mannose Endo H-sensitive carbohydrates. In terms of processing, cys-169, Cys-171, Cys-193 and Cys-196 form intramolecular disulfide bonds. The preferential partner for each Cys is not known. As to expression, pancreas.

The protein localises to the endoplasmic reticulum lumen. Functionally, as a co-chaperone for HSPA5 it is required for proper folding, trafficking or degradation of proteins. Binds directly to both unfolded proteins that are substrates for ERAD and nascent unfolded peptide chains, but dissociates from the HSPA5-unfolded protein complex before folding is completed. May help recruiting HSPA5 and other chaperones to the substrate. Stimulates HSPA5 ATPase activity. It is necessary for maturation and correct trafficking of PKD1. This Canis lupus familiaris (Dog) protein is DnaJ homolog subfamily B member 11 (DNAJB11).